A 162-amino-acid chain; its full sequence is ATP synthase subunit b 1 (162 aa).

A helical membrane pass occupies residues 3–23; that stretch reads FLDATFFAFVGLVLFLALVVY.

This sequence belongs to the ATPase B chain family. As to quaternary structure, F-type ATPases have 2 components, F(1) - the catalytic core - and F(0) - the membrane proton channel. F(1) has five subunits: alpha(3), beta(3), gamma(1), delta(1), epsilon(1). F(0) has three main subunits: a(1), b(2) and c(10-14). The alpha and beta chains form an alternating ring which encloses part of the gamma chain. F(1) is attached to F(0) by a central stalk formed by the gamma and epsilon chains, while a peripheral stalk is formed by the delta and b chains.

The protein resides in the cell inner membrane. Its function is as follows. F(1)F(0) ATP synthase produces ATP from ADP in the presence of a proton or sodium gradient. F-type ATPases consist of two structural domains, F(1) containing the extramembraneous catalytic core and F(0) containing the membrane proton channel, linked together by a central stalk and a peripheral stalk. During catalysis, ATP synthesis in the catalytic domain of F(1) is coupled via a rotary mechanism of the central stalk subunits to proton translocation. Component of the F(0) channel, it forms part of the peripheral stalk, linking F(1) to F(0). This is ATP synthase subunit b 1 from Rhizobium johnstonii (strain DSM 114642 / LMG 32736 / 3841) (Rhizobium leguminosarum bv. viciae).